We begin with the raw amino-acid sequence, 161 residues long: Nucleotide-binding protein Pnuc_0290 (161 aa).

The protein belongs to the YajQ family.

Functionally, nucleotide-binding protein. The protein is Nucleotide-binding protein Pnuc_0290 of Polynucleobacter asymbioticus (strain DSM 18221 / CIP 109841 / QLW-P1DMWA-1) (Polynucleobacter necessarius subsp. asymbioticus).